The chain runs to 424 residues: Inositol phosphosphingolipids phospholipase C (424 aa).

Glu49 lines the Mg(2+) pocket. His289 serves as the catalytic Proton acceptor. A run of 2 helical transmembrane segments spans residues 335-357 (LRIA…IAWC) and 364-386 (VIIL…CIGL).

This sequence belongs to the neutral sphingomyelinase family. Mg(2+) serves as cofactor.

Its subcellular location is the cell membrane. It localises to the endoplasmic reticulum membrane. The protein operates within lipid metabolism; sphingolipid metabolism. Inositol phosphosphingolipids phospholipase essential for the coordination of cell wall formation. Responsible for the hydrolysis of the phosphosphingolipids (IPS), inositol phosphorylceramide (IPC), mannosylinositol phosphorylceramide (MIPC), and mannosyldiinositol phosphorylceramide (M(IP)2C). This Schizosaccharomyces pombe (strain 972 / ATCC 24843) (Fission yeast) protein is Inositol phosphosphingolipids phospholipase C (css1).